The chain runs to 53 residues: Light-harvesting protein B-800/820 alpha chain (53 aa).

Residues 1 to 14 are Cytoplasmic-facing; sequence MNQGKIWTVVNPAV. A helical membrane pass occupies residues 15–35; it reads GLPLLLGSVAITALLVHLAVL. Histidine 31 serves as a coordination point for a bacteriochlorophyll. Topologically, residues 36 to 53 are periplasmic; the sequence is THTTWFPAFTQGGLKKAA.

The protein belongs to the antenna complex alpha subunit family. The core complex is formed by different alpha and beta chains, binding bacteriochlorophyll molecules, and arranged most probably in tetrameric structures disposed around the reaction center. The non-pigmented gamma chains may constitute additional components.

It localises to the cell inner membrane. Antenna complexes are light-harvesting systems, which transfer the excitation energy to the reaction centers. This is Light-harvesting protein B-800/820 alpha chain from Rhodoblastus acidophilus (Rhodopseudomonas acidophila).